A 333-amino-acid polypeptide reads, in one-letter code: 4-hydroxy-2-oxovalerate aldolase (333 aa).

One can recognise a Pyruvate carboxyltransferase domain in the interval 4–254; sequence VKIFDLTLRD…DCGIDLYKTM (251 aa). 12–13 contributes to the substrate binding site; that stretch reads RD. Position 13 (Asp13) interacts with Mn(2+). The Proton acceptor role is filled by His16. His193 provides a ligand contact to substrate. Mn(2+) is bound by residues His193 and His195. Tyr284 is a binding site for substrate.

Belongs to the 4-hydroxy-2-oxovalerate aldolase family.

The catalysed reaction is (S)-4-hydroxy-2-oxopentanoate = acetaldehyde + pyruvate. This Desulfitobacterium hafniense (strain DSM 10664 / DCB-2) protein is 4-hydroxy-2-oxovalerate aldolase.